A 730-amino-acid polypeptide reads, in one-letter code: Catalase-peroxidase (730 aa).

A cross-link (tryptophyl-tyrosyl-methioninium (Trp-Tyr) (with M-251)) is located at residues 92 to 225 (WHSAGTYRSI…LSAVHMGLIY (134 aa)). H93 functions as the Proton acceptor in the catalytic mechanism. A cross-link (tryptophyl-tyrosyl-methioninium (Tyr-Met) (with W-92)) is located at residues 225–251 (YVNPEGPDGIPDPVASARDIRTTFRRM). Position 266 (H266) interacts with heme b.

It belongs to the peroxidase family. Peroxidase/catalase subfamily. Homodimer or homotetramer. Heme b is required as a cofactor. Formation of the three residue Trp-Tyr-Met cross-link is important for the catalase, but not the peroxidase activity of the enzyme.

The protein localises to the cytoplasm. The catalysed reaction is H2O2 + AH2 = A + 2 H2O. It catalyses the reaction 2 H2O2 = O2 + 2 H2O. Its function is as follows. Bifunctional enzyme with both catalase and broad-spectrum peroxidase activity. The protein is Catalase-peroxidase of Blumeria hordei (Barley powdery mildew).